The chain runs to 105 residues: Nucleoid-associated protein Ccur92_18190 (105 aa).

This sequence belongs to the YbaB/EbfC family. Homodimer.

It is found in the cytoplasm. Its subcellular location is the nucleoid. In terms of biological role, binds to DNA and alters its conformation. May be involved in regulation of gene expression, nucleoid organization and DNA protection. This is Nucleoid-associated protein Ccur92_18190 from Campylobacter curvus (strain 525.92).